Here is a 1154-residue protein sequence, read N- to C-terminus: BEACH domain-containing protein lvsF (1154 aa).

Disordered stretches follow at residues 92-123 and 139-167; these read HLPTPQPIPQSILSPSKPTPTPTPPIVVEQPS and TSKVTTPTPPTPTPTPPTPQPTSIAPTPT. The span at 145 to 158 shows a compositional bias: pro residues; the sequence is PTPPTPTPTPPTPQ. One can recognise a BEACH-type PH domain in the interval 289–384; it reads DMNERNILEL…TRNQVYDLLV (96 aa). A BEACH domain is found at 389-697; it reads TNIMHINEQA…QIFKTPHPQR (309 aa). 3 disordered regions span residues 554 to 575, 739 to 762, and 779 to 825; these read SFESSSSSRNGGGGDDDDNFEN, NNLNNNNNNNNNNNSNSNSNLNNN, and NSLN…ENLN. 2 stretches are compositionally biased toward low complexity: residues 779-788 and 795-822; these read NSLNNENNEN and NSNSNSSDNIKNSNGFENNDNNFNNENE. WD repeat units lie at residues 858-897, 900-939, 942-980, 992-1031, 1034-1074, 1076-1110, and 1119-1154; these read LHKDKISALYLSNNSETIYSVSLDSCLKIYSLKEKRQIRS, LCNLALSSFQLSKDEKYIIIGSWDNNIYVYSVGNGSISYS, GHSDAVSCLKLHNNNILVSGSWDSSVKVWRTHRQSNGAI, DSDTEIRSIDISSNGTIFCAGSSDGYLYFYDLLTLQLIRR, CFFD…FSFK, KGEIHCLDSDGSSLIIGTDRGLCLWSLTTGTEIKD, and SSNESIHSLNVSINQSSNKPILLTGTEAGSISIWQQ.

This is BEACH domain-containing protein lvsF (lvsF) from Dictyostelium discoideum (Social amoeba).